A 166-amino-acid polypeptide reads, in one-letter code: MWSFLKISLIVAMDKKRVIGKDNDIPWRISSDWEYVKNTTKGHAIILGRKNLQSIGRALPDRRNIILTRDKNFNFKDCEIAHSIEAAFKLCENEEEVFIFGGEQIYVMFLPYVEKMYVTKIHHEFEGDTFFPVVNFDDWKEVSVEKGIKDEKNPYDYYFHIYERIR.

The DHFR domain maps to 6 to 164 (KISLIVAMDK…YDYYFHIYER (159 aa)). Residue 10–12 (IVA) coordinates substrate. Residues 11–12 (VA) and 19–24 (IGKDND) each bind NADP(+). Position 32 (aspartate 32) interacts with substrate. 48–51 (GRKN) contacts NADP(+). Substrate is bound at residue arginine 62. Residues 67 to 70 (LTRD) and 100 to 105 (FGGEQI) contribute to the NADP(+) site. Threonine 119 is a binding site for substrate.

It belongs to the dihydrofolate reductase family.

The enzyme catalyses (6S)-5,6,7,8-tetrahydrofolate + NADP(+) = 7,8-dihydrofolate + NADPH + H(+). Its pathway is cofactor biosynthesis; tetrahydrofolate biosynthesis; 5,6,7,8-tetrahydrofolate from 7,8-dihydrofolate: step 1/1. In terms of biological role, key enzyme in folate metabolism. Catalyzes an essential reaction for de novo glycine and purine synthesis, and for DNA precursor synthesis. This chain is Dihydrofolate reductase (dfrD), found in Staphylococcus haemolyticus.